Consider the following 1160-residue polypeptide: GPI inositol-deacylase (1160 aa).

The interval 1-92 (MHRRSSGSPV…DPRSSSAAMP (92 aa)) is disordered. The segment covering 57-92 (GASTPRSRNSSTWRMPSSATTTLLPPDPRSSSAAMP) has biased composition (polar residues). An N-linked (GlcNAc...) asparagine glycan is attached at Asn65. Residues 120-140 (PCSILTALTSLLASLFLCAIL) traverse the membrane as a helical segment. Ser307 is an active-site residue. The next 2 membrane-spanning stretches (helical) occupy residues 786-806 (LVMR…ALVL) and 832-852 (SSLP…ATSS). Asn866 is a glycosylation site (N-linked (GlcNAc...) asparagine). A run of 2 helical transmembrane segments spans residues 886-906 (AFFW…CVIL) and 973-993 (ILLL…VACI). A glycan (N-linked (GlcNAc...) asparagine) is linked at Asn1019. Helical transmembrane passes span 1023 to 1043 (SIFI…LVWA), 1060 to 1080 (VLSI…TMIP), 1092 to 1112 (LILF…AYLL), and 1115 to 1135 (LANI…GFSV).

This sequence belongs to the GPI inositol-deacylase family.

The protein localises to the endoplasmic reticulum membrane. Its function is as follows. Involved in inositol deacylation of GPI-anchored proteins which plays important roles in the quality control and ER-associated degradation of GPI-anchored proteins. The polypeptide is GPI inositol-deacylase (bst1) (Aspergillus terreus (strain NIH 2624 / FGSC A1156)).